The following is a 456-amino-acid chain: Glutamyl-tRNA reductase (456 aa).

Substrate contacts are provided by residues 49-52 (TCNR), Ser-109, 114-116 (EQQ), and Gln-120. Catalysis depends on Cys-50, which acts as the Nucleophile. Residue 189–194 (GAGSMG) participates in NADP(+) binding.

This sequence belongs to the glutamyl-tRNA reductase family. As to quaternary structure, homodimer.

It catalyses the reaction (S)-4-amino-5-oxopentanoate + tRNA(Glu) + NADP(+) = L-glutamyl-tRNA(Glu) + NADPH + H(+). It participates in porphyrin-containing compound metabolism; protoporphyrin-IX biosynthesis; 5-aminolevulinate from L-glutamyl-tRNA(Glu): step 1/2. Its function is as follows. Catalyzes the NADPH-dependent reduction of glutamyl-tRNA(Glu) to glutamate 1-semialdehyde (GSA). The protein is Glutamyl-tRNA reductase of Mycolicibacterium vanbaalenii (strain DSM 7251 / JCM 13017 / BCRC 16820 / KCTC 9966 / NRRL B-24157 / PYR-1) (Mycobacterium vanbaalenii).